Here is a 203-residue protein sequence, read N- to C-terminus: Transcriptional regulator GfcR (203 aa).

The protein belongs to the purine/pyrimidine phosphoribosyltransferase family. GfcR subfamily.

The chain is Transcriptional regulator GfcR from Methanothrix thermoacetophila (strain DSM 6194 / JCM 14653 / NBRC 101360 / PT) (Methanosaeta thermophila).